The following is a 275-amino-acid chain: MSSTPSNQNIIPLIKKESIVSLFEKGTRQDGRKLTDYRPLSITLDYAKKADGSALVKLGTTMVLAGTKLEIDKPYEDTPNQGNLIVNVELLPLAYETFEPGPPDENAIELARVVDRSLRDSKALDLTKLVIEPGKSVWTVWLDVYVLDYGGNVLDACTLASVAALYNTKVYKVEQDSNGFRVNKNEVVGKLPLNHPVVTVSIAKVDKYLIVDPDLDEESIMDTKVSFSYTPDLKIVGIQKSGKGSMSLQDIDQAENTARLVAVKLLEELKKQLGI.

This sequence belongs to the RNase PH family. Rrp42 subfamily. In terms of assembly, component of the archaeal exosome complex. Forms a hexameric ring-like arrangement composed of 3 Rrp41-Rrp42 heterodimers. The hexameric ring associates with a trimer of Rrp4 and/or Csl4 subunits.

Its subcellular location is the cytoplasm. Its function is as follows. Non-catalytic component of the exosome, which is a complex involved in RNA degradation. Contributes to the structuring of the Rrp41 active site. This Saccharolobus islandicus (strain L.S.2.15 / Lassen #1) (Sulfolobus islandicus) protein is Exosome complex component Rrp42.